Consider the following 130-residue polypeptide: MPNNYRLEKVSSLLKKEITLILQNDLENDLIRDHFVNISKIDLSGDLQHCKIYITSTAQEKVRTEIVENLNTAKSSIRHSLGKRIEMRRVPEIIFKDDVVLDKGLSVLKLLDELKNKNQNHNVEDKDAKS.

It belongs to the RbfA family. As to quaternary structure, monomer. Binds 30S ribosomal subunits, but not 50S ribosomal subunits or 70S ribosomes.

The protein localises to the cytoplasm. One of several proteins that assist in the late maturation steps of the functional core of the 30S ribosomal subunit. Associates with free 30S ribosomal subunits (but not with 30S subunits that are part of 70S ribosomes or polysomes). Required for efficient processing of 16S rRNA. May interact with the 5'-terminal helix region of 16S rRNA. This is Ribosome-binding factor A from Prochlorococcus marinus (strain AS9601).